Here is a 333-residue protein sequence, read N- to C-terminus: METGPHYNYYKNRELSIVLAPFSGGQGKLGVEKGPKYMLKHGLQTSIEDLGWSTELEPSMDEAQFVGKLKMEKDSTTGGSSVMIDGVKAKRADLVGEATKLVYNSVSKVVQANRFPLTLGGDHSIAIGTVSAVLDKYPDAGLLWIDAHADINTIESTPSGNLHGCPVSFLMGLNKDVPHCPESLKWVPGNLSPKKIAYIGLRDVDAGEKKILKDLGIAAFSMYHVDKYGINAVIEMAMKAVHPETNGEGPIMCSYDVDGVDPLYIPATGTPVRGGLTLREGLFLVERLAESGNLIALDVVECNPDLAIHDIHVSNTISAGCAIARCALGETLL.

Met1 carries the post-translational modification N-acetylmethionine. The residue at position 16 (Ser16) is a Phosphoserine. Phosphothreonine is present on Thr77. Positions 123, 146, 148, and 150 each coordinate Mn(2+). Substrate-binding positions include 148–152 (HADIN), 159–161 (SGN), and Asp205. Mn(2+)-binding residues include Asp256 and Asp258. Thr270 carries the post-translational modification Phosphothreonine. 2 residues coordinate substrate: Thr270 and Glu301.

This sequence belongs to the arginase family. Homotrimer. It depends on Mn(2+) as a cofactor.

The enzyme catalyses L-arginine + H2O = urea + L-ornithine. It participates in nitrogen metabolism; urea cycle; L-ornithine and urea from L-arginine: step 1/1. In Saccharomyces cerevisiae (strain ATCC 204508 / S288c) (Baker's yeast), this protein is Arginase (CAR1).